The chain runs to 566 residues: Zinc finger protein 704 (566 aa).

Disordered regions lie at residues 1-148, 166-203, and 253-324; these read MQAR…ARGA, DFRRDSSKKPSHHLFPLAMEEDVRTADTKKTSRVLDQE, and PLVR…DEAD. Positions 12–31 are enriched in low complexity; it reads LGSRRGGAAPAPAPEAAALG. The segment covering 32 to 55 has biased composition (pro residues); the sequence is LPPPGPSPAAAPGSWRPPLPPPRG. Over residues 56-72 the composition is skewed to low complexity; the sequence is TGPSRAAAASSPVLLLL. Over residues 91 to 100 the composition is skewed to basic and acidic residues; it reads RVTEKPRGVA. A compositionally biased stretch (acidic residues) spans 101–128; sequence EEEDDDEEEDEEVVVEVVDGDEDDEDAE. Residues 186 to 203 are compositionally biased toward basic and acidic residues; it reads EDVRTADTKKTSRVLDQE. Residues 267–290 are compositionally biased toward low complexity; it reads SGSWKEGAPSSSSSSGYWSWSAPS. The C2H2-type zinc finger occupies 346–371; sequence FKCLWKSCGKVLNTAAGIQKHIRAVH. S378 and S381 each carry phosphoserine. Disordered regions lie at residues 409–436 and 497–535; these read VSPSQSLASAPAFPIPDSSRTETPCAKT and PVSPPHHPTAGSGEQRQHAHTALSSPPRGTVTLRKPRGE. The tract at residues 471–566 is sufficient for binding to RE2 sequence motifs; the sequence is GSAKFTPNGS…WKKACQRFID (96 aa). Residues 537–541 carry the CR1 motif; that stretch reads KKCRK. The short motif at 555-559 is the CR2 element; that stretch reads CRWKK.

Its subcellular location is the nucleus. Functionally, transcription factor which binds to RE2 sequence elements in the MYOD1 enhancer. The sequence is that of Zinc finger protein 704 from Mus musculus (Mouse).